The following is a 486-amino-acid chain: Transcription factor bHLH49 (486 aa).

Positions 1–17 are enriched in basic and acidic residues; that stretch reads MDLSAKDEFSAEKRNPD. Disordered stretches follow at residues 1 to 30 and 194 to 300; these read MDLSAKDEFSAEKRNPDNYDSVNNPSGDWR and KEST…KDGY. Composition is skewed to polar residues over residues 198-221 and 243-254; these read VRSSEQAKPNVPGSGNVSEDTQSS and QKNSEAAQSHRS. Over residues 273–293 the composition is skewed to low complexity; the sequence is QSPNSPGKKSNSGKQQGKQSS. Residues 309–359 enclose the bHLH domain; sequence QATNSHSLAERVRREKISERMKFLQDLVPGCNKVTGKAVMLDEIINYVQSL.

In terms of assembly, homodimer. Interacts with IBH1. Expressed constitutively in roots, stems, and flowers.

The protein resides in the nucleus. In terms of biological role, transcriptional activator involved in cell elongation. Regulates the expression of a subset of genes involved in cell expansion by binding to the G-box motif. This chain is Transcription factor bHLH49 (BHLH49), found in Arabidopsis thaliana (Mouse-ear cress).